We begin with the raw amino-acid sequence, 462 residues long: Elongation factor 1-alpha (462 aa).

At Gly-2 the chain carries Blocked amino end (Gly). Positions 5 to 242 (KIHINIVVIG…DAILPPSRPT (238 aa)) constitute a tr-type G domain. The segment at 14 to 21 (GHVDSGKS) is G1. 14 to 21 (GHVDSGKS) lines the GTP pocket. Lys-36 carries the N6,N6,N6-trimethyllysine modification. Lys-55 is subject to N6-methyllysine. Residues 70-74 (GITID) form a G2 region. Residue Lys-79 is modified to N6,N6,N6-trimethyllysine. The interval 91–94 (DAPG) is G3. GTP-binding positions include 91–95 (DAPGH) and 153–156 (NKMD). The interval 153-156 (NKMD) is G4. The tract at residues 194-196 (SGW) is G5. N6,N6,N6-trimethyllysine occurs at positions 219 and 318. Glu-374 carries the post-translational modification 5-glutamyl glycerylphosphorylethanolamine.

Belongs to the TRAFAC class translation factor GTPase superfamily. Classic translation factor GTPase family. EF-Tu/EF-1A subfamily. The N-terminus is blocked.

It localises to the cytoplasm. Its function is as follows. This protein promotes the GTP-dependent binding of aminoacyl-tRNA to the A-site of ribosomes during protein biosynthesis. In Artemia salina (Brine shrimp), this protein is Elongation factor 1-alpha.